The sequence spans 302 residues: Sushi domain-containing protein 6 (302 aa).

The signal sequence occupies residues 1-39; the sequence is MCHGKIAPKSSSEFVVTSVGHGVFLQLVILCALLGDGLA. Positions 40 to 104 constitute a Sushi domain; it reads SVCPLPPEPE…TPAMEVSCHL (65 aa). 2 disulfides stabilise this stretch: Cys-42/Cys-89 and Cys-74/Cys-102. Residues 120–140 form a helical membrane-spanning segment; sequence IVASTASSVALILLLVVLFVL. 2 disordered regions span residues 202–241 and 256–302; these read GSAPSGRNMPREQQLQGQEACSSAGGEDEAPGHSGLCEAW and TSSW…LKEA. Composition is skewed to polar residues over residues 212–222, 256–267, and 279–290; these read REQQLQGQEAC, TSSWVAGSGSSR, and SDIQSLLSLTSE.

Its subcellular location is the membrane. May play a role in growth-suppressive activity and cell death. May be involved in the production of chemokine molecules in umbilical vein endothelial cells (HUVECs) cultured in THP1 monocyte LPS-induced medium. Plays a role in preventing tumor onset. This is Sushi domain-containing protein 6 from Mus musculus (Mouse).